We begin with the raw amino-acid sequence, 365 residues long: Zinc finger protein lsy-2 (365 aa).

The interval 1–36 (MLTRRNAKQSQRNSADQSLSEFNSSSMTHGSNQSVY) is disordered. Over residues 8–36 (KQSQRNSADQSLSEFNSSSMTHGSNQSVY) the composition is skewed to polar residues. C2H2-type zinc fingers lie at residues 78–100 (HQCN…AVIH), 106–128 (FRCD…RSVH), 134–156 (HACP…LRTH), 264–287 (HDCP…TLEH), and 296–318 (FFCE…MSYH).

The protein localises to the nucleus speckle. Involved in transcriptional regulation. Required to specify left-right asymmetry of the ASE gustatory neurons, probably acting upstream of microRNA lsy-6. Involved in maintaining the distinction between somatic and germ cells, perhaps acting by repressing germ cell-specific genes in somatic cells. This Caenorhabditis elegans protein is Zinc finger protein lsy-2.